The following is a 225-amino-acid chain: NAD(P)H-quinone oxidoreductase subunit K, chloroplastic (225 aa).

The [4Fe-4S] cluster site is built by cysteine 43, cysteine 44, cysteine 108, and cysteine 139.

This sequence belongs to the complex I 20 kDa subunit family. In terms of assembly, NDH is composed of at least 16 different subunits, 5 of which are encoded in the nucleus. [4Fe-4S] cluster is required as a cofactor.

The protein localises to the plastid. It is found in the chloroplast thylakoid membrane. The enzyme catalyses a plastoquinone + NADH + (n+1) H(+)(in) = a plastoquinol + NAD(+) + n H(+)(out). The catalysed reaction is a plastoquinone + NADPH + (n+1) H(+)(in) = a plastoquinol + NADP(+) + n H(+)(out). NDH shuttles electrons from NAD(P)H:plastoquinone, via FMN and iron-sulfur (Fe-S) centers, to quinones in the photosynthetic chain and possibly in a chloroplast respiratory chain. The immediate electron acceptor for the enzyme in this species is believed to be plastoquinone. Couples the redox reaction to proton translocation, and thus conserves the redox energy in a proton gradient. This is NAD(P)H-quinone oxidoreductase subunit K, chloroplastic from Dioscorea elephantipes (Elephant's foot yam).